Reading from the N-terminus, the 514-residue chain is Membrane-bound lytic murein transglycosylase F (514 aa).

A signal peptide spans 1 to 30 (MKKLKINYLFIGILTLLLAAALWPSIPWFG). The non-LT domain stretch occupies residues 31–269 (KTENHVAAIQ…RIEEKYLGHG (239 aa)). An LT domain region spans residues 270 to 514 (DDFDYVDTRS…LFTPQKKEEK (245 aa)). Residue Glu314 is part of the active site.

It in the N-terminal section; belongs to the bacterial solute-binding protein 3 family. In the C-terminal section; belongs to the transglycosylase Slt family.

Its subcellular location is the cell outer membrane. The catalysed reaction is Exolytic cleavage of the (1-&gt;4)-beta-glycosidic linkage between N-acetylmuramic acid (MurNAc) and N-acetylglucosamine (GlcNAc) residues in peptidoglycan, from either the reducing or the non-reducing ends of the peptidoglycan chains, with concomitant formation of a 1,6-anhydrobond in the MurNAc residue.. Murein-degrading enzyme that degrades murein glycan strands and insoluble, high-molecular weight murein sacculi, with the concomitant formation of a 1,6-anhydromuramoyl product. Lytic transglycosylases (LTs) play an integral role in the metabolism of the peptidoglycan (PG) sacculus. Their lytic action creates space within the PG sacculus to allow for its expansion as well as for the insertion of various structures such as secretion systems and flagella. The sequence is that of Membrane-bound lytic murein transglycosylase F from Salmonella arizonae (strain ATCC BAA-731 / CDC346-86 / RSK2980).